Consider the following 471-residue polypeptide: MQKEYKTITEISGPLVFAEVDEPVGYDEMVEIETPSGETRRGQVLESTSEFVAIQVFEGTSGIDRNSSVRFLGETLQMPLTEELLGRVLSGSGEPIDGGPEIEPDEEREIVGAAINPTAREYPEEFIQTGVSAIDGMNTLIRGQKLPIFSGSGLPHNELALQIARQASVPEEESGDDEAGSEFAVIFGAMGITQEEANEFMDDFERTGALERSVVFMNLADDPAVERTVTPRMALTTAEYLAFEEGYHVLVILTDMTNYCEALREIGAAREEVPGRRGYPGYMYTDLAQLYERAGRIEGREGSVTQIPILTMPGDDDTHPIPDLTGYITEGQIYIDRNLNSQGIEPPINVLPSLSRLMDDGIGEGFTREDHPDVSDQAYAAYAEGEDLRDLVNIVGREALSERDNKYLDFADRFEEEFVQQGYDTNRDVEETLDLAWELLSDLPKEELNRIDEEAIEEYYVEDEQAAQTAD.

Belongs to the ATPase alpha/beta chains family. As to quaternary structure, has multiple subunits with at least A(3), B(3), C, D, E, F, H, I and proteolipid K(x).

The protein localises to the cell membrane. Component of the A-type ATP synthase that produces ATP from ADP in the presence of a proton gradient across the membrane. The B chain is a regulatory subunit. In Natronomonas pharaonis (strain ATCC 35678 / DSM 2160 / CIP 103997 / JCM 8858 / NBRC 14720 / NCIMB 2260 / Gabara) (Halobacterium pharaonis), this protein is A-type ATP synthase subunit B.